The sequence spans 270 residues: Cystinosin homolog (270 aa).

Residues 9-75 form the PQ-loop 1 domain; that stretch reads LEISYEIVGW…LYFSPVIQKQ (67 aa). A helical transmembrane segment spans residues 14–34; the sequence is EIVGWIAFASWSISFYPQLIL. N-linked (GlcNAc...) asparagine glycosylation occurs at N52. 3 helical membrane-spanning segments follow: residues 93-113, 123-143, and 148-168; these read VAFSIHAVVMTAVTLFQIFIY, LAIGIVVVVWGFAAICFFIAL, and WLWLISIFNSIQVFMTCVKYI. Residues 151 to 213 form the PQ-loop 2 domain; the sequence is LISIFNSIQV…IQSIDQNSWK (63 aa). A glycan (N-linked (GlcNAc...) asparagine) is linked at N174. 2 consecutive transmembrane segments (helical) span residues 180–200 and 223–243; these read TVGWSIGNILLDFTGGLANYL and LLSLISIFFDILFMFQHYVLY. The tract at residues 250–270 is disordered; that stretch reads KSPETGEESNEPLIDSSHEHV.

This sequence belongs to the cystinosin (TC 2.A.43.1) family.

It is found in the lysosome membrane. In terms of biological role, thought to transport cystine out of lysosomes. The polypeptide is Cystinosin homolog (Arabidopsis thaliana (Mouse-ear cress)).